Here is an 83-residue protein sequence, read N- to C-terminus: Exodeoxyribonuclease 7 small subunit (83 aa).

It belongs to the XseB family. Heterooligomer composed of large and small subunits.

The protein resides in the cytoplasm. It catalyses the reaction Exonucleolytic cleavage in either 5'- to 3'- or 3'- to 5'-direction to yield nucleoside 5'-phosphates.. Its function is as follows. Bidirectionally degrades single-stranded DNA into large acid-insoluble oligonucleotides, which are then degraded further into small acid-soluble oligonucleotides. This chain is Exodeoxyribonuclease 7 small subunit, found in Rhizobium leguminosarum bv. trifolii (strain WSM2304).